We begin with the raw amino-acid sequence, 364 residues long: Anhydro-N-acetylmuramic acid kinase (364 aa).

11-18 (GSSLDGID) is an ATP binding site.

This sequence belongs to the anhydro-N-acetylmuramic acid kinase family.

The enzyme catalyses 1,6-anhydro-N-acetyl-beta-muramate + ATP + H2O = N-acetyl-D-muramate 6-phosphate + ADP + H(+). Its pathway is amino-sugar metabolism; 1,6-anhydro-N-acetylmuramate degradation. The protein operates within cell wall biogenesis; peptidoglycan recycling. Functionally, catalyzes the specific phosphorylation of 1,6-anhydro-N-acetylmuramic acid (anhMurNAc) with the simultaneous cleavage of the 1,6-anhydro ring, generating MurNAc-6-P. Is required for the utilization of anhMurNAc either imported from the medium or derived from its own cell wall murein, and thus plays a role in cell wall recycling. The protein is Anhydro-N-acetylmuramic acid kinase of Pseudomonas syringae pv. syringae (strain B728a).